Reading from the N-terminus, the 419-residue chain is Gustatory receptor for bitter taste 93a (419 aa).

Over 1-55 (MFSSSSAMTGKRAESWSRLLLLWLYRCARGLLVLSSSLDRDKLQLKATKQGSRNR) the chain is Cytoplasmic. Residues 56 to 76 (FLHILWRCIVVMIYAGLWPML) form a helical membrane-spanning segment. Residues 77-90 (TSAVIGKRLESYAD) lie on the Extracellular side of the membrane. The chain crosses the membrane as a helical span at residues 91-111 (VLALAQSMSVSILAVISFVIQ). The Cytoplasmic portion of the chain corresponds to 112–145 (ARGENQFREVLNRYLALYQRICLTTRLRHLFPTK). Residues 146–166 (FVVFFLLKLFFTLCGCFHEII) form a helical membrane-spanning segment. The Extracellular portion of the chain corresponds to 167 to 184 (PLFENSHFDDISQMVGTG). The chain crosses the membrane as a helical span at residues 185–205 (FGIYMWLGTLCVLDACFLGFL). At 206–277 (VSGILYEHMA…NSFRRILQWQ (72 aa)) the chain is on the cytoplasmic side. Residues 278–298 (ILFYIYLNFINICLMLYQYIL) form a helical membrane-spanning segment. The Extracellular segment spans residues 299–305 (HFLNDDE). The helical transmembrane segment at 306 to 326 (VVFVSIVMAFVKLANLVLLMM) threads the bilayer. Topologically, residues 327-383 (CADYTVRQSEVPKKLPLDIVCSDMDERWDKSVETFLGQLQTQRLEIKVLGFFHLNNE) are cytoplasmic. The chain crosses the membrane as a helical span at residues 384 to 404 (FILLILSAIISYLFILIQFGI). The Extracellular segment spans residues 405–419 (TGGFEASEDIKNRFD).

The protein belongs to the insect chemoreceptor superfamily. Gustatory receptor (GR) family. Gr93a subfamily. In larvae, is expressed in neurons of the dorsal pharyngeal sense organs.

It localises to the cell membrane. Its function is as follows. Gustatory receptor required for response to the bitter in taste neurons. Gr93a cells respond to bitter compounds such as caffeine. Flies avoid bitter substances, suggesting that Gr93a neuron activity is sufficient to mediate avoidance behavior. The polypeptide is Gustatory receptor for bitter taste 93a (Gr93a) (Drosophila melanogaster (Fruit fly)).